Here is a 631-residue protein sequence, read N- to C-terminus: 1-deoxy-D-xylulose-5-phosphate synthase (631 aa).

Thiamine diphosphate-binding positions include histidine 78 and 119–121 (AHS). Residue aspartate 150 participates in Mg(2+) binding. Thiamine diphosphate is bound by residues 151 to 152 (GA), asparagine 179, tyrosine 286, and glutamate 368. Asparagine 179 is a binding site for Mg(2+).

Belongs to the transketolase family. DXPS subfamily. As to quaternary structure, homodimer. It depends on Mg(2+) as a cofactor. Thiamine diphosphate is required as a cofactor.

It catalyses the reaction D-glyceraldehyde 3-phosphate + pyruvate + H(+) = 1-deoxy-D-xylulose 5-phosphate + CO2. Its pathway is metabolic intermediate biosynthesis; 1-deoxy-D-xylulose 5-phosphate biosynthesis; 1-deoxy-D-xylulose 5-phosphate from D-glyceraldehyde 3-phosphate and pyruvate: step 1/1. Its function is as follows. Catalyzes the acyloin condensation reaction between C atoms 2 and 3 of pyruvate and glyceraldehyde 3-phosphate to yield 1-deoxy-D-xylulose-5-phosphate (DXP). The protein is 1-deoxy-D-xylulose-5-phosphate synthase of Verminephrobacter eiseniae (strain EF01-2).